The sequence spans 152 residues: Phosphopantetheine adenylyltransferase (152 aa).

Substrate is bound at residue Ser-9. ATP contacts are provided by residues 9 to 10 (SF) and His-17. Residues Lys-41, Thr-73, and Arg-87 each contribute to the substrate site. ATP is bound by residues 88 to 90 (GLR), Glu-98, and 122 to 128 (TSFISSS).

The protein belongs to the bacterial CoaD family. As to quaternary structure, homohexamer. Mg(2+) is required as a cofactor.

The protein resides in the cytoplasm. It carries out the reaction (R)-4'-phosphopantetheine + ATP + H(+) = 3'-dephospho-CoA + diphosphate. It functions in the pathway cofactor biosynthesis; coenzyme A biosynthesis; CoA from (R)-pantothenate: step 4/5. Reversibly transfers an adenylyl group from ATP to 4'-phosphopantetheine, yielding dephospho-CoA (dPCoA) and pyrophosphate. This Flavobacterium johnsoniae (strain ATCC 17061 / DSM 2064 / JCM 8514 / BCRC 14874 / CCUG 350202 / NBRC 14942 / NCIMB 11054 / UW101) (Cytophaga johnsonae) protein is Phosphopantetheine adenylyltransferase.